A 383-amino-acid polypeptide reads, in one-letter code: N-acetyldiaminopimelate deacetylase (383 aa).

Asp75 is an active-site residue. Glu134 functions as the Proton acceptor in the catalytic mechanism.

The protein belongs to the peptidase M20A family. N-acetyldiaminopimelate deacetylase subfamily.

The enzyme catalyses N-acetyl-(2S,6S)-2,6-diaminopimelate + H2O = (2S,6S)-2,6-diaminopimelate + acetate. It functions in the pathway amino-acid biosynthesis; L-lysine biosynthesis via DAP pathway; LL-2,6-diaminopimelate from (S)-tetrahydrodipicolinate (acetylase route): step 3/3. Its function is as follows. Catalyzes the conversion of N-acetyl-diaminopimelate to diaminopimelate and acetate. The sequence is that of N-acetyldiaminopimelate deacetylase from Lactobacillus acidophilus (strain ATCC 700396 / NCK56 / N2 / NCFM).